Here is a 295-residue protein sequence, read N- to C-terminus: Pyridoxal 5'-phosphate synthase subunit PdxS (295 aa).

D25 contributes to the D-ribose 5-phosphate binding site. The active-site Schiff-base intermediate with D-ribose 5-phosphate is the K82. A D-ribose 5-phosphate-binding site is contributed by G154. Residue R166 coordinates D-glyceraldehyde 3-phosphate. D-ribose 5-phosphate is bound by residues G215 and 236-237 (GS).

Belongs to the PdxS/SNZ family. As to quaternary structure, in the presence of PdxT, forms a dodecamer of heterodimers.

The catalysed reaction is aldehydo-D-ribose 5-phosphate + D-glyceraldehyde 3-phosphate + L-glutamine = pyridoxal 5'-phosphate + L-glutamate + phosphate + 3 H2O + H(+). It functions in the pathway cofactor biosynthesis; pyridoxal 5'-phosphate biosynthesis. In terms of biological role, catalyzes the formation of pyridoxal 5'-phosphate from ribose 5-phosphate (RBP), glyceraldehyde 3-phosphate (G3P) and ammonia. The ammonia is provided by the PdxT subunit. Can also use ribulose 5-phosphate and dihydroxyacetone phosphate as substrates, resulting from enzyme-catalyzed isomerization of RBP and G3P, respectively. The protein is Pyridoxal 5'-phosphate synthase subunit PdxS of Macrococcus caseolyticus (strain JCSC5402) (Macrococcoides caseolyticum).